The following is a 576-amino-acid chain: Arginine--tRNA ligase (576 aa).

Residues 122–132 (PNVAKEMHVGH) carry the 'HIGH' region motif.

Belongs to the class-I aminoacyl-tRNA synthetase family. As to quaternary structure, monomer.

It localises to the cytoplasm. It carries out the reaction tRNA(Arg) + L-arginine + ATP = L-arginyl-tRNA(Arg) + AMP + diphosphate. In Photobacterium profundum (strain SS9), this protein is Arginine--tRNA ligase.